The primary structure comprises 569 residues: Interleukin-1 receptor type 1 (569 aa).

Residues 1–17 (MKVLLRLICFIALLISS) form the signal peptide. The Extracellular segment spans residues 18–336 (LEADKCKERE…LIYPVTNFQK (319 aa)). Cystine bridges form between Cys-23/Cys-104, Cys-44/Cys-96, Cys-121/Cys-164, and Cys-142/Cys-196. Ig-like C2-type domains follow at residues 23 to 110 (CKER…IKIS), 118 to 210 (PNLC…YPIT), and 226 to 328 (PVIV…IQLI). N-linked (GlcNAc...) asparagine glycosylation is present at Asn-100. Residues Asn-193, Asn-233, Asn-249, Asn-263, and Asn-297 are each glycosylated (N-linked (GlcNAc...) asparagine). Cysteines 248 and 312 form a disulfide. The helical transmembrane segment at 337-356 (HMIGICVTLTVIIVCSVFIY) threads the bilayer. Topologically, residues 357–569 (KIFKIDIVLW…LQREAHVPLG (213 aa)) are cytoplasmic. One can recognise a TIR domain in the interval 383-538 (KTYDAYILYP…RFWKNVRYHM (156 aa)). Glu-470 is a catalytic residue. Position 496 is a phosphotyrosine (Tyr-496). The segment at 540-569 (VQRRSPSSKHQLLSPATKEKLQREAHVPLG) is disordered. The span at 556-569 (TKEKLQREAHVPLG) shows a compositional bias: basic and acidic residues.

It belongs to the interleukin-1 receptor family. As to quaternary structure, the interleukin-1 receptor complex is a heterodimer of IL1R1 and IL1RAP. Interacts with PIK3R1. Interacts with IL1A. Post-translationally, a soluble form (sIL1R1) is probably produced by proteolytic cleavage at the cell surface (shedding). In terms of processing, rapidly phosphorylated on Tyr-496 in response to IL-1, which creates a SH2 binding site for the PI 3-kinase regulatory subunit PIK3R1. As to expression, expressed in T-helper cell subsets. Preferentially expressed in T-helper 1 (Th1) cells.

It is found in the membrane. Its subcellular location is the cell membrane. The protein localises to the secreted. The catalysed reaction is NAD(+) + H2O = ADP-D-ribose + nicotinamide + H(+). Functionally, receptor for IL1A, IL1B and IL1RN. After binding to interleukin-1 associates with the coreceptor IL1RAP to form the high affinity interleukin-1 receptor complex which mediates interleukin-1-dependent activation of NF-kappa-B, MAPK and other pathways. Signaling involves the recruitment of adapter molecules such as TOLLIP, MYD88, and IRAK1 or IRAK2 via the respective TIR domains of the receptor/coreceptor subunits. Binds ligands with comparable affinity and binding of antagonist IL1RN prevents association with IL1RAP to form a signaling complex. Involved in IL1B-mediated costimulation of IFNG production from T-helper 1 (Th1) cells. The polypeptide is Interleukin-1 receptor type 1 (IL1R1) (Homo sapiens (Human)).